Reading from the N-terminus, the 248-residue chain is Endonuclease V (248 aa).

Mg(2+) is bound by residues aspartate 54 and aspartate 118.

Belongs to the endonuclease V family. Mg(2+) is required as a cofactor.

Its subcellular location is the cytoplasm. It catalyses the reaction Endonucleolytic cleavage at apurinic or apyrimidinic sites to products with a 5'-phosphate.. Functionally, DNA repair enzyme involved in the repair of deaminated bases. Selectively cleaves double-stranded DNA at the second phosphodiester bond 3' to a deoxyinosine leaving behind the intact lesion on the nicked DNA. The polypeptide is Endonuclease V (Natronomonas pharaonis (strain ATCC 35678 / DSM 2160 / CIP 103997 / JCM 8858 / NBRC 14720 / NCIMB 2260 / Gabara) (Halobacterium pharaonis)).